Reading from the N-terminus, the 1668-residue chain is Kinesin-like protein KIF21B (1668 aa).

In terms of domain architecture, Kinesin motor spans 8-371 (CVKVAVRIRP…LKYANRARNI (364 aa)). ATP is bound at residue 87 to 94 (GQTGAGKT). Residues 372-465 (KNKVVVNQDK…LMSQEANLLL (94 aa)) are a coiled coil. Residues 401 to 1100 (MEYKAGKRVI…LQALIYNVQH (700 aa)) form an interaction with TRIM3 region. Disordered regions lie at residues 553–629 (KKKE…PEEK) and 837–866 (RVGL…GARS). Residues 579–628 (NSEETDENEAEEEEEERDESGCEEEEGREDEDEDSGSEESLVDSDSDPEE) are compositionally biased toward acidic residues. The residue at position 580 (Ser-580) is a Phosphoserine. Residue Thr-583 is modified to Phosphothreonine. The span at 847–866 (SGAEVSASTTSSEAESGARS) shows a compositional bias: low complexity. The stretch at 924 to 1019 (IIDIVMQRMT…TKEELDSTDT (96 aa)) forms a coiled coil. Residues Ser-1150, Ser-1168, and Ser-1217 each carry the phosphoserine modification. Polar residues predominate over residues 1199–1219 (LPTRGSTFPRQSRGATDTSPL). The disordered stretch occupies residues 1199–1253 (LPTRGSTFPRQSRGATDTSPLTRRKSYDRGQPIRSTDMGFTPPSSPPTRPRNDRN). Thr-1239 bears the Phosphothreonine mark. Residue Ser-1243 is modified to Phosphoserine. WD repeat units lie at residues 1308 to 1345 (GHTK…EIAA), 1348 to 1386 (GHPN…KCIR), 1412 to 1450 (QGEH…PIGK), 1453 to 1495 (GHIG…TGTI), 1504 to 1541 (PHYD…LIQQ), 1545 to 1584 (AHKD…PIGE), and 1587 to 1624 (GHDS…TPCL).

This sequence belongs to the TRAFAC class myosin-kinesin ATPase superfamily. Kinesin family. As to quaternary structure, interacts with TRIM3; the interaction positively affects motility of KIF21B. Interacts with GABARAP and GABA(A) receptor subunits: GABRG2, GABRA1 and GABRA2. May interact with GABA(A) receptor subunits: GABRB2 and GABRB3. Expressed in brain (at protein level). Expressed in spleen and at lower levels in testes.

The protein resides in the cytoplasm. The protein localises to the cytoskeleton. It is found in the cell projection. It localises to the dendrite. Its subcellular location is the growth cone. The protein resides in the axon. The protein localises to the cytoplasmic vesicle. Functionally, plus-end directed microtubule-dependent motor protein which displays processive activity. Is involved in regulation of microtubule dynamics, synapse function and neuronal morphology, including dendritic tree branching and spine formation. Plays a role in lerning and memory. Involved in delivery of gamma-aminobutyric acid (GABA(A)) receptor to cell surface. This Mus musculus (Mouse) protein is Kinesin-like protein KIF21B (Kif21b).